A 198-amino-acid chain; its full sequence is Recombination protein RecR (198 aa).

The C4-type zinc finger occupies 57–72 (CRQCRTLSEEELCPQC). Residues 80–174 (SLLCVVEGPL…TLSRIAHGVP (95 aa)) enclose the Toprim domain.

Belongs to the RecR family.

Functionally, may play a role in DNA repair. It seems to be involved in an RecBC-independent recombinational process of DNA repair. It may act with RecF and RecO. The sequence is that of Recombination protein RecR from Pseudomonas aeruginosa (strain LESB58).